A 547-amino-acid chain; its full sequence is Chaperonin GroEL (547 aa).

ATP contacts are provided by residues 30–33 (TLGP), Lys-51, 87–91 (DGTTT), Gly-415, and Asp-496.

The protein belongs to the chaperonin (HSP60) family. Forms a cylinder of 14 subunits composed of two heptameric rings stacked back-to-back. Interacts with the co-chaperonin GroES.

It is found in the cytoplasm. It carries out the reaction ATP + H2O + a folded polypeptide = ADP + phosphate + an unfolded polypeptide.. Together with its co-chaperonin GroES, plays an essential role in assisting protein folding. The GroEL-GroES system forms a nano-cage that allows encapsulation of the non-native substrate proteins and provides a physical environment optimized to promote and accelerate protein folding. This Actinobacillus pleuropneumoniae serotype 7 (strain AP76) protein is Chaperonin GroEL.